Reading from the N-terminus, the 33-residue chain is ANKRPVWIMAHMVNAVAQIDEFVNLGANSIETD.

His11 is an active-site residue. Residues Glu31 and Asp33 each contribute to the Mg(2+) site.

Belongs to the arthropod phospholipase D family. Class II subfamily. Requires Mg(2+) as cofactor. In terms of processing, contains 2 disulfide bonds. As to expression, expressed by the venom gland.

It is found in the secreted. The enzyme catalyses an N-(acyl)-sphingosylphosphocholine = an N-(acyl)-sphingosyl-1,3-cyclic phosphate + choline. It carries out the reaction an N-(acyl)-sphingosylphosphoethanolamine = an N-(acyl)-sphingosyl-1,3-cyclic phosphate + ethanolamine. It catalyses the reaction a 1-acyl-sn-glycero-3-phosphocholine = a 1-acyl-sn-glycero-2,3-cyclic phosphate + choline. The catalysed reaction is a 1-acyl-sn-glycero-3-phosphoethanolamine = a 1-acyl-sn-glycero-2,3-cyclic phosphate + ethanolamine. Its function is as follows. Dermonecrotic toxins cleave the phosphodiester linkage between the phosphate and headgroup of certain phospholipids (sphingolipid and lysolipid substrates), forming an alcohol (often choline) and a cyclic phosphate. This toxin acts on sphingomyelin (SM) with high activity (9.5 U/mg). It may also act on ceramide phosphoethanolamine (CPE), lysophosphatidylcholine (LPC) and lysophosphatidylethanolamine (LPE), but not on lysophosphatidylserine (LPS), and lysophosphatidylglycerol (LPG). It acts by transphosphatidylation, releasing exclusively cyclic phosphate products as second products. Induces dermonecrosis, hemolysis, increased vascular permeability, edema, inflammatory response, and platelet aggregation. The protein is Dermonecrotic toxin LbSicTox-alphaIB1b of Loxosceles boneti (North American fiddleback spider).